We begin with the raw amino-acid sequence, 338 residues long: Solute carrier family 35 member G5 (338 aa).

Positions 1-21 (MAGSHPYFNLPDSTHPSPPSA) are disordered. The next 9 membrane-spanning stretches (helical) occupy residues 37–57 (TNGL…VGPL), 67–87 (LPSL…ALPL), 105–125 (CFCA…VQVV), 160–180 (CGLL…LWTL), 190–210 (ALGY…LLVY), 221–241 (TVAF…LFVL), 250–270 (LLSW…FTCV), 281–301 (LVCA…YYVL), and 305–325 (VAPS…IITA). The region spanning 49–174 (LPAGFVGPLS…SILGLIIIVG (126 aa)) is the EamA 1 domain. One can recognise an EamA 2 domain in the interval 272–325 (YAVTKAHPALVCAVLHSEVVVALILQYYVLHETVAPSDIMGAGIVLGSIAIITA).

The protein belongs to the SLC35G solute transporter family.

Its subcellular location is the membrane. The chain is Solute carrier family 35 member G5 (SLC35G5) from Pan troglodytes (Chimpanzee).